The following is a 450-amino-acid chain: Glucose-6-phosphate isomerase (450 aa).

Glu-291 acts as the Proton donor in catalysis. Residues His-312 and Lys-426 contribute to the active site.

This sequence belongs to the GPI family.

It localises to the cytoplasm. It carries out the reaction alpha-D-glucose 6-phosphate = beta-D-fructose 6-phosphate. It participates in carbohydrate biosynthesis; gluconeogenesis. It functions in the pathway carbohydrate degradation; glycolysis; D-glyceraldehyde 3-phosphate and glycerone phosphate from D-glucose: step 2/4. In terms of biological role, catalyzes the reversible isomerization of glucose-6-phosphate to fructose-6-phosphate. This Clostridium botulinum (strain Langeland / NCTC 10281 / Type F) protein is Glucose-6-phosphate isomerase.